A 201-amino-acid chain; its full sequence is ADP-ribosylation factor-related protein 1 (201 aa).

Met-1 is subject to N-acetylmethionine. Residues 24-31, 75-79, and 134-137 each bind GTP; these read GLDNAGKT, DLGGQ, and NKQD.

It belongs to the small GTPase superfamily. Arf family. In terms of assembly, interacts with SYS1.

It is found in the golgi apparatus. The protein resides in the trans-Golgi network. Trans-Golgi-associated GTPase that regulates protein sorting. Controls the targeting of ARL1 and its effector to the trans-Golgi. Required for the lipidation of chylomicrons in the intestine and required for VLDL lipidation in the liver. The polypeptide is ADP-ribosylation factor-related protein 1 (ARFRP1) (Bos taurus (Bovine)).